The chain runs to 822 residues: Dimethyl sulfoxide/trimethylamine N-oxide reductase (822 aa).

A signal peptide (tat-type signal) is located at residues 1 to 42; the sequence is MTKLSGQELHAELSRRAFLSYTAAVGALGLCGTSLLAQGARA. Mo-bis(molybdopterin guanine dinucleotide)-binding positions include Trp158, 158–160, Ser189, 232–233, 262–263, 283–285, 364–365, Arg368, Asn476, His480, 500–501, Arg523, Asp553, 683–686, Arg689, 691–693, Asn779, and 796–797; these read WKS, KT, IN, QTD, WS, QD, ASHP, HSQ, and GQ.

It belongs to the prokaryotic molybdopterin-containing oxidoreductase family. Homodimer. The cofactor is Mo-bis(molybdopterin guanine dinucleotide). Post-translationally, predicted to be exported by the Tat system. The position of the signal peptide cleavage has been experimentally proven.

It is found in the periplasm. The enzyme catalyses dimethyl sulfide + a menaquinone + H2O = dimethyl sulfoxide + a menaquinol. It catalyses the reaction trimethylamine + 2 Fe(III)-[cytochrome c] + H2O = trimethylamine N-oxide + 2 Fe(II)-[cytochrome c] + 3 H(+). In terms of biological role, catalyzes the reduction of dimethyl sulfoxide (DMSO) and trimethylamine N-oxide (TMAO) to dimethyl sulfide (DMS) and trimethylamine, respectively. The terminal DMSO reductase can also use various sulfoxides and N-oxide compounds as terminal electron acceptor in addition to DMSO and TMAO. In Cereibacter sphaeroides (Rhodobacter sphaeroides), this protein is Dimethyl sulfoxide/trimethylamine N-oxide reductase (dmsA).